Reading from the N-terminus, the 204-residue chain is GTP cyclohydrolase 1 (204 aa).

Residues C92, H95, and C165 each coordinate Zn(2+).

Belongs to the GTP cyclohydrolase I family. Homomer.

The catalysed reaction is GTP + H2O = 7,8-dihydroneopterin 3'-triphosphate + formate + H(+). It participates in cofactor biosynthesis; 7,8-dihydroneopterin triphosphate biosynthesis; 7,8-dihydroneopterin triphosphate from GTP: step 1/1. The polypeptide is GTP cyclohydrolase 1 (Mycobacterium avium (strain 104)).